Here is a 296-residue protein sequence, read N- to C-terminus: Bifunctional protein FolD (296 aa).

NADP(+) contacts are provided by residues 166–168, S191, and I232; that span reads GRS.

The protein belongs to the tetrahydrofolate dehydrogenase/cyclohydrolase family. Homodimer.

The enzyme catalyses (6R)-5,10-methylene-5,6,7,8-tetrahydrofolate + NADP(+) = (6R)-5,10-methenyltetrahydrofolate + NADPH. The catalysed reaction is (6R)-5,10-methenyltetrahydrofolate + H2O = (6R)-10-formyltetrahydrofolate + H(+). It participates in one-carbon metabolism; tetrahydrofolate interconversion. Its function is as follows. Catalyzes the oxidation of 5,10-methylenetetrahydrofolate to 5,10-methenyltetrahydrofolate and then the hydrolysis of 5,10-methenyltetrahydrofolate to 10-formyltetrahydrofolate. This is Bifunctional protein FolD from Cereibacter sphaeroides (strain ATCC 17025 / ATH 2.4.3) (Rhodobacter sphaeroides).